A 714-amino-acid polypeptide reads, in one-letter code: MAEEIITPVYCTGVSAQVQKQRAKELGLGRHENAIKYLGQDYEQLRARCLQSGTLFRDEAFPPVPQSLGFKDLGPNSSKTYGIKWKRPTELLSNPQFIVDGATRTDICQGALGDCWLLAAIASLTLNDTLLHRVVPHGQSFQNGYAGIFHFQLWQFGEWVDVVVDDLLPIKDGKLVFVHSAEGNEFWSALLEKAYAKVNGSYESLSGGSTSEGFEDFTGGVTEWYELRKAPSDLYQIILKALERGSLLGCSIDISSVLDMEAITFKKLVKGHAYSVTGAKQVNYRGQMVNLIRMRNPWGEVEWTGAWSDSSSEWNSVDPYEREQLRVKMEDGEFWMSFRDFMREFTRLEICNLTPDALKSRTIRKWNTTLYEGTWRRGSTAGGCRNYPATFWVNPQFKIRLDETDDPDDYGDRESGCSFVLALMQKHRRRERRFGRDMETIGFAVYEVPPELVGQPALHLKRDFFLANASRARSEQFINLREVSTRFRLPPGEYVVVPSTFEPNKEGDFVLRFFSEKSAGTAELDDQIQANLPDEQVLSEEEIDENFKALFRQLAGEDMEISVKELRTILNRIISKHKDLRTKGFSLESCRSMVNLMDRDGNGKLGLVEFNILWNRIRNYLSIFRKFDLDKSGSMSAYEMRMAIESAGFKLNKKLYELIITRYSEPDLAVDFDNFVCCLVRLETMFRFFKTLDTDLDGVVTFDLFKWLQLTMFA.

The 300-residue stretch at 55 to 354 folds into the Calpain catalytic domain; it reads LFRDEAFPPV…FTRLEICNLT (300 aa). The Ca(2+) site is built by Gln109 and Asp114. Residues Cys115, His272, and Asn296 contribute to the active site. 3 residues coordinate Ca(2+): Ser316, Asp318, and Glu323. Thr354 carries the post-translational modification Phosphothreonine. The tract at residues 355 to 526 is domain III; that stretch reads PDALKSRTIR…KSAGTAELDD (172 aa). Residues 527 to 542 form a linker region; it reads QIQANLPDEQVLSEEE. EF-hand domains follow at residues 541–576, 585–618, 615–650, and 680–714; these read EEID…IISK, FSLE…NRIR, NRIR…AGFK, and VRLE…TMFA. The domain IV stretch occupies residues 543–713; that stretch reads IDENFKALFR…LFKWLQLTMF (171 aa). 10 residues coordinate Ca(2+): Asp598, Asp600, Asn602, Lys604, Glu609, Asp628, Asp630, Ser632, Ser634, and Glu639.

It belongs to the peptidase C2 family. In terms of assembly, forms a heterodimer with a small (regulatory) subunit (CAPNS1). Ca(2+) is required as a cofactor. In terms of processing, undergoes calcium-induced successive autoproteolytic cleavages that generate a membrane-bound 78 kDa active form and an intracellular 75 kDa active form. Calpastatin reduces with high efficiency the transition from 78 kDa to 75 kDa calpain forms. As to expression, ubiquitous.

The protein resides in the cytoplasm. Its subcellular location is the cell membrane. The enzyme catalyses Broad endopeptidase specificity.. With respect to regulation, activated by micromolar concentrations of calcium and inhibited by calpastatin. In terms of biological role, calcium-regulated non-lysosomal thiol-protease which catalyze limited proteolysis of substrates involved in cytoskeletal remodeling and signal transduction. Proteolytically cleaves CTBP1. Cleaves and activates caspase-7 (CASP7). The chain is Calpain-1 catalytic subunit (CAPN1) from Macaca fascicularis (Crab-eating macaque).